We begin with the raw amino-acid sequence, 396 residues long: 1-deoxy-D-xylulose 5-phosphate reductoisomerase (396 aa).

Residues Thr10, Gly11, Ser12, Ile13, Asn38, and Asn123 each contribute to the NADPH site. Lys124 lines the 1-deoxy-D-xylulose 5-phosphate pocket. Glu125 serves as a coordination point for NADPH. Asp149 is a Mn(2+) binding site. 4 residues coordinate 1-deoxy-D-xylulose 5-phosphate: Ser150, Glu151, Ser185, and His208. Position 151 (Glu151) interacts with Mn(2+). Residue Gly214 coordinates NADPH. 4 residues coordinate 1-deoxy-D-xylulose 5-phosphate: Ser221, Asn226, Lys227, and Glu230. Glu230 is a binding site for Mn(2+).

The protein belongs to the DXR family. It depends on Mg(2+) as a cofactor. Mn(2+) is required as a cofactor.

It carries out the reaction 2-C-methyl-D-erythritol 4-phosphate + NADP(+) = 1-deoxy-D-xylulose 5-phosphate + NADPH + H(+). It participates in isoprenoid biosynthesis; isopentenyl diphosphate biosynthesis via DXP pathway; isopentenyl diphosphate from 1-deoxy-D-xylulose 5-phosphate: step 1/6. Its function is as follows. Catalyzes the NADPH-dependent rearrangement and reduction of 1-deoxy-D-xylulose-5-phosphate (DXP) to 2-C-methyl-D-erythritol 4-phosphate (MEP). The protein is 1-deoxy-D-xylulose 5-phosphate reductoisomerase of Shewanella pealeana (strain ATCC 700345 / ANG-SQ1).